Consider the following 406-residue polypeptide: Cysteine desulfurase (406 aa).

Lysine 226 carries the post-translational modification N6-(pyridoxal phosphate)lysine. The Cysteine persulfide intermediate role is filled by cysteine 364.

Belongs to the class-V pyridoxal-phosphate-dependent aminotransferase family. Csd subfamily. In terms of assembly, homodimer. Interacts with SufE and the SufBCD complex composed of SufB, SufC and SufD. The interaction with SufE is required to mediate the direct transfer of the sulfur atom from the S-sulfanylcysteine. Pyridoxal 5'-phosphate serves as cofactor.

The protein resides in the cytoplasm. The enzyme catalyses (sulfur carrier)-H + L-cysteine = (sulfur carrier)-SH + L-alanine. The catalysed reaction is L-selenocysteine + AH2 = hydrogenselenide + L-alanine + A + H(+). Its pathway is cofactor biosynthesis; iron-sulfur cluster biosynthesis. Cysteine desulfurases mobilize the sulfur from L-cysteine to yield L-alanine, an essential step in sulfur metabolism for biosynthesis of a variety of sulfur-containing biomolecules. Component of the suf operon, which is activated and required under specific conditions such as oxidative stress and iron limitation. Acts as a potent selenocysteine lyase in vitro, that mobilizes selenium from L-selenocysteine. Selenocysteine lyase activity is however unsure in vivo. The protein is Cysteine desulfurase of Escherichia coli O8 (strain IAI1).